Reading from the N-terminus, the 312-residue chain is NADPH-dependent alpha-keto amide reductase (312 aa).

Positions 25, 26, 27, and 59 each coordinate NADPH. Residues Tyr64 and His122 each act as proton donor in the active site. The residue at position 123 (Ser123) is a Phosphoserine. Residues Ser157, Gln179, Ser208, Leu210, Thr257, Thr258, Ser259, Ser260, Lys261, and Arg264 each contribute to the NADPH site.

It belongs to the aldo/keto reductase family. As to quaternary structure, monomer. In terms of processing, the N-terminus is blocked.

It localises to the cytoplasm. It is found in the nucleus. In terms of biological role, reduces aromatic alpha-keto amides, aliphatic and aromatic alpha-keto esters, but not beta-keto esters. This Saccharomyces cerevisiae (strain ATCC 204508 / S288c) (Baker's yeast) protein is NADPH-dependent alpha-keto amide reductase.